Reading from the N-terminus, the 620-residue chain is LEAF RUST 10 DISEASE-RESISTANCE LOCUS RECEPTOR-LIKE PROTEIN KINASE-like 2.3 (620 aa).

A signal peptide spans 1–30 (MDSLSSMGFQTASFFLILLFLFYHLPCVPS). Residues 31–256 (QQERSRLCKP…NNGTYSDNRP (226 aa)) lie on the Extracellular side of the membrane. Asn-75, Asn-85, Asn-93, Asn-132, Asn-148, Asn-162, Asn-189, Asn-231, and Asn-248 each carry an N-linked (GlcNAc...) asparagine glycan. A helical membrane pass occupies residues 257-277 (FLVTIGTVLGSILCVCVVLFL). At 278 to 620 (AFYLNERRIA…SVESSIYSEV (343 aa)) the chain is on the cytoplasmic side. The Protein kinase domain occupies 314 to 596 (KSFTEVVGRG…SLDPPPKPLL (283 aa)). ATP contacts are provided by residues 320 to 328 (VGRGGFGTV) and Lys-342. Asp-431 serves as the catalytic Proton acceptor. Residues 586 to 620 (DSLDPPPKPLLHMPMQNNNAESSQLSVESSIYSEV) are disordered. Over residues 600 to 620 (MQNNNAESSQLSVESSIYSEV) the composition is skewed to polar residues.

This sequence belongs to the protein kinase superfamily. Ser/Thr protein kinase family.

It is found in the membrane. It catalyses the reaction L-seryl-[protein] + ATP = O-phospho-L-seryl-[protein] + ADP + H(+). It carries out the reaction L-threonyl-[protein] + ATP = O-phospho-L-threonyl-[protein] + ADP + H(+). This is LEAF RUST 10 DISEASE-RESISTANCE LOCUS RECEPTOR-LIKE PROTEIN KINASE-like 2.3 from Arabidopsis thaliana (Mouse-ear cress).